We begin with the raw amino-acid sequence, 379 residues long: 1-deoxy-D-xylulose 5-phosphate reductoisomerase (379 aa).

7 residues coordinate NADPH: threonine 10, glycine 11, serine 12, isoleucine 13, glycine 36, asparagine 38, and asparagine 121. Lysine 122 lines the 1-deoxy-D-xylulose 5-phosphate pocket. Glutamate 123 lines the NADPH pocket. Aspartate 147 serves as a coordination point for Mn(2+). 4 residues coordinate 1-deoxy-D-xylulose 5-phosphate: serine 148, glutamate 149, serine 173, and histidine 196. A Mn(2+)-binding site is contributed by glutamate 149. Residue glycine 202 participates in NADPH binding. Serine 209, asparagine 214, lysine 215, and glutamate 218 together coordinate 1-deoxy-D-xylulose 5-phosphate. Glutamate 218 serves as a coordination point for Mn(2+).

The protein belongs to the DXR family. The cofactor is Mg(2+). It depends on Mn(2+) as a cofactor.

It carries out the reaction 2-C-methyl-D-erythritol 4-phosphate + NADP(+) = 1-deoxy-D-xylulose 5-phosphate + NADPH + H(+). Its pathway is isoprenoid biosynthesis; isopentenyl diphosphate biosynthesis via DXP pathway; isopentenyl diphosphate from 1-deoxy-D-xylulose 5-phosphate: step 1/6. Functionally, catalyzes the NADPH-dependent rearrangement and reduction of 1-deoxy-D-xylulose-5-phosphate (DXP) to 2-C-methyl-D-erythritol 4-phosphate (MEP). This Shouchella clausii (strain KSM-K16) (Alkalihalobacillus clausii) protein is 1-deoxy-D-xylulose 5-phosphate reductoisomerase.